The following is a 250-amino-acid chain: Cytochrome c oxidase subunit 2 (250 aa).

The Mitochondrial intermembrane portion of the chain corresponds to 1-27 (MGLLFNNLIMNFDAPSPWGIYFQDSAT). Residues 28-61 (PQMEGLVELHDNIMYYLVVILFGVGWILLSIIRN) form a helical membrane-spanning segment. Topologically, residues 62–77 (YISTKSPISHKYLNHG) are mitochondrial matrix. Residues 78-107 (TLIELIWTITPAVILILIAFPSFKLLYLMD) traverse the membrane as a helical segment. The Mitochondrial intermembrane portion of the chain corresponds to 108 to 250 (EVSDPSMSVL…EKFLTWLEEQ (143 aa)). Cu cation-binding residues include His-185, Cys-220, Glu-222, Cys-224, His-228, and Met-231. A Mg(2+)-binding site is contributed by Glu-222.

The protein belongs to the cytochrome c oxidase subunit 2 family. Component of the cytochrome c oxidase (complex IV, CIV), a multisubunit enzyme composed of 11 subunits. The complex is composed of a catalytic core of 3 subunits Cox1, Cox2 and Cox3, encoded in the mitochondrial DNA, and 8 supernumerary subunits Cox4, Cox5a/Cox5, Cox6, Cox7, Cox8, Cox7a/Cox9, Cox6b/Cox12 and Cox6a/Cox13, which are encoded in the nuclear genome. The complex exists as a monomer or a dimer and forms respiratory supercomplexes (SCs) in the inner mitochondrial membrane with NADH-ubiquinone oxidoreductase (complex I, CI) and ubiquinol-cytochrome c oxidoreductase (cytochrome b-c1 complex, complex III, CIII), resulting in various different assemblies (supercomplexes I(1)IV(1), I(1)III(3)IV(2), III(2)IV(1) and III(2)IV(2) as well as larger supercomplexes of compositions like I(1)III(2)IV(5-6)). Requires Cu cation as cofactor.

It localises to the mitochondrion inner membrane. It carries out the reaction 4 Fe(II)-[cytochrome c] + O2 + 8 H(+)(in) = 4 Fe(III)-[cytochrome c] + 2 H2O + 4 H(+)(out). Component of the cytochrome c oxidase, the last enzyme in the mitochondrial electron transport chain which drives oxidative phosphorylation. The respiratory chain contains 3 multisubunit complexes succinate dehydrogenase (complex II, CII), ubiquinol-cytochrome c oxidoreductase (cytochrome b-c1 complex, complex III, CIII) and cytochrome c oxidase (complex IV, CIV), that cooperate to transfer electrons derived from NADH and succinate to molecular oxygen, creating an electrochemical gradient over the inner membrane that drives transmembrane transport and the ATP synthase. Cytochrome c oxidase is the component of the respiratory chain that catalyzes the reduction of oxygen to water. Electrons originating from reduced cytochrome c in the intermembrane space (IMS) are transferred via the dinuclear copper A center (CU(A)) of Cox2 and heme A of Cox1 to the active site in Cox1, a binuclear center (BNC) formed by heme A3 and copper B (CU(B)). The BNC reduces molecular oxygen to 2 water molecules using 4 electrons from cytochrome c in the IMS and 4 protons from the mitochondrial matrix. The protein is Cytochrome c oxidase subunit 2 (cox-2) of Neurospora crassa (strain ATCC 24698 / 74-OR23-1A / CBS 708.71 / DSM 1257 / FGSC 987).